A 291-amino-acid chain; its full sequence is 4-hydroxy-tetrahydrodipicolinate synthase (291 aa).

T44 is a pyruvate binding site. Y132 serves as the catalytic Proton donor/acceptor. The active-site Schiff-base intermediate with substrate is K160. Residue I202 participates in pyruvate binding.

Belongs to the DapA family. As to quaternary structure, homotetramer; dimer of dimers.

The protein localises to the cytoplasm. The catalysed reaction is L-aspartate 4-semialdehyde + pyruvate = (2S,4S)-4-hydroxy-2,3,4,5-tetrahydrodipicolinate + H2O + H(+). Its pathway is amino-acid biosynthesis; L-lysine biosynthesis via DAP pathway; (S)-tetrahydrodipicolinate from L-aspartate: step 3/4. Functionally, catalyzes the condensation of (S)-aspartate-beta-semialdehyde [(S)-ASA] and pyruvate to 4-hydroxy-tetrahydrodipicolinate (HTPA). In Sphingopyxis alaskensis (strain DSM 13593 / LMG 18877 / RB2256) (Sphingomonas alaskensis), this protein is 4-hydroxy-tetrahydrodipicolinate synthase.